The sequence spans 176 residues: Ribosome maturation factor RimM (176 aa).

Residues 97 to 176 (DSEFYHRDLI…QILVDWDPDF (80 aa)) form the PRC barrel domain.

This sequence belongs to the RimM family. As to quaternary structure, binds ribosomal protein uS19.

It localises to the cytoplasm. Its function is as follows. An accessory protein needed during the final step in the assembly of 30S ribosomal subunit, possibly for assembly of the head region. Essential for efficient processing of 16S rRNA. May be needed both before and after RbfA during the maturation of 16S rRNA. It has affinity for free ribosomal 30S subunits but not for 70S ribosomes. This chain is Ribosome maturation factor RimM, found in Shewanella frigidimarina (strain NCIMB 400).